Consider the following 456-residue polypeptide: Major facilitator superfamily domain-containing protein 10 (456 aa).

11 helical membrane-spanning segments follow: residues 25 to 45 (VVAV…LLLP), 87 to 107 (VLFG…SAPL), 125 to 145 (LAGV…AAFL), 149 to 169 (VIGG…ADLG), 179 to 199 (AVIG…GAFL), 204 to 224 (VPWL…CFLP), 278 to 298 (LVYF…SFLV), 311 to 328 (KMFF…GAYA), 343 to 363 (AILL…LPIL), 365 to 385 (LGLL…SSVV), and 422 to 442 (LAGA…PFSI).

This sequence belongs to the major facilitator superfamily.

It is found in the nucleus inner membrane. It localises to the cell membrane. Its function is as follows. Probable organic anion transporter which may serve as a transporter for some non-steroidal anti-inflammatory drugs (NSAIDs) as well as other organic anions across the luminal membranes of renal proximal tubules at the final excretion step into the urine. This Bos taurus (Bovine) protein is Major facilitator superfamily domain-containing protein 10 (MFSD10).